We begin with the raw amino-acid sequence, 376 residues long: ATP synthase gamma chain, chloroplastic (376 aa).

The transit peptide at 1–52 directs the protein to the chloroplast; it reads MSCSNVTMLVSSKPSLPDASNLSFRSAFNPFQLPSQNSSSSCTPSRPTSIQC. Cys-133 is an active-site residue. Residues Cys-250 and Cys-256 are joined by a disulfide bond.

This sequence belongs to the ATPase gamma chain family. In terms of assembly, F-type ATPases have 2 components, CF(1) - the catalytic core - and CF(0) - the membrane proton channel. CF(1) has five subunits: alpha(3), beta(3), gamma(1), delta(1), epsilon(1). CF(0) has four main subunits: a, b, b' and c.

It is found in the plastid. The protein resides in the chloroplast thylakoid membrane. Functionally, produces ATP from ADP in the presence of a proton gradient across the membrane. The gamma chain is believed to be important in regulating ATPase activity and the flow of protons through the CF(0) complex. The chain is ATP synthase gamma chain, chloroplastic (ATPC) from Pisum sativum (Garden pea).